A 235-amino-acid chain; its full sequence is Caffeoyl-CoA O-methyltransferase (235 aa).

Lysine 8 contacts substrate. Residues valine 52, glutamate 74, 76–77 (GV), serine 82, aspartate 100, and alanine 129 each bind S-adenosyl-L-methionine. Aspartate 151 is a binding site for substrate. Position 151 (aspartate 151) interacts with a divalent metal cation. An S-adenosyl-L-methionine-binding site is contributed by aspartate 153. A divalent metal cation contacts are provided by aspartate 177 and asparagine 178.

This sequence belongs to the class I-like SAM-binding methyltransferase superfamily. Cation-dependent O-methyltransferase family. CCoAMT subfamily. The cofactor is a divalent metal cation.

The catalysed reaction is (E)-caffeoyl-CoA + S-adenosyl-L-methionine = (E)-feruloyl-CoA + S-adenosyl-L-homocysteine + H(+). Its pathway is aromatic compound metabolism; phenylpropanoid biosynthesis. Functionally, methylates caffeoyl-CoA to feruloyl-CoA and 5-hydroxyferuloyl-CoA to sinapoyl-CoA. Plays a role in the synthesis of feruloylated polysaccharides. Involved in the reinforcement of the plant cell wall. Also involved in the responding to wounding or pathogen challenge by the increased formation of cell wall-bound ferulic acid polymers. In Populus kitakamiensis (Aspen), this protein is Caffeoyl-CoA O-methyltransferase.